The sequence spans 113 residues: MNTVRVTFLLVFVLAVSLGQADKDENRMEMQEKTEQGKSYLDFAENLLLQKLEELEAKLLEEDSEESRNSRQKRCIGEGVPCDENDPRCCSGLVRLKPTLHGIWYKSYYCYKK.

The signal sequence occupies residues 1 to 21; it reads MNTVRVTFLLVFVLAVSLGQA. Residues 22 to 74 constitute a propeptide that is removed on maturation; sequence DKDENRMEMQEKTEQGKSYLDFAENLLLQKLEELEAKLLEEDSEESRNSRQKR. The segment covering 60 to 69 has biased composition (basic and acidic residues); the sequence is LEEDSEESRN. Residues 60-83 form a disordered region; the sequence is LEEDSEESRNSRQKRCIGEGVPCD. Disulfide bonds link Cys75/Cys90 and Cys89/Cys110.

The protein belongs to the neurotoxin 14 (magi-1) family. 01 (HNTX-16) subfamily. In terms of tissue distribution, expressed by the venom gland.

It is found in the secreted. In terms of biological role, probable ion channel inhibitor. This is U11-theraphotoxin-Hhn1n from Cyriopagopus hainanus (Chinese bird spider).